We begin with the raw amino-acid sequence, 264 residues long: MKKALLVVSFGTSYHDTCEKNIVACERDLAASCPDRDLFRAFTSGMIIRKLRQRDGIDIDTPLQALQKLAAQGYQDVAIQSLHIINGDEYEKIVREVQLLRPLFTRLTLGVPLLSSHNDYVQLMQALRQQMPSLRQTEKVVFMGHGASHHAFAAYACLDHMMTAQRFPARVGAVESYPEVDILIDSLRDEGVTGVHLMPLMLVAGDHAINDMASDDGDSWKMRFNAAGIPATPWLSGLGENPAIRAMFVAHLHQALNMAVEEAA.

Positions 45, 84, 85, 88, 89, and 92 each coordinate Co-sirohydrochlorin. The active-site Proton acceptor is His-145. Co(2+)-binding residues include His-145 and Glu-175. Positions 202, 203, and 207 each coordinate Co-sirohydrochlorin. Position 207 (His-207) interacts with Co(2+).

This sequence belongs to the CbiK family. In terms of assembly, homotrimer.

The catalysed reaction is Co-sirohydrochlorin + 2 H(+) = sirohydrochlorin + Co(2+). It catalyses the reaction Co-precorrin-2 + 3 H(+) = precorrin-2 + Co(2+). The protein operates within cofactor biosynthesis; adenosylcobalamin biosynthesis; cob(II)yrinate a,c-diamide from sirohydrochlorin (anaerobic route): step 1/10. Functionally, cobalt chelatase responsible for the insertion of cobalt during anaerobic cobalamin biosynthesis. Can catalyze the insertion of Co(2+) into either sirohydrochlorin or precorrin-2. It is not clear which is the natural substrate in Salmonella. This is Sirohydrochlorin cobaltochelatase from Salmonella typhimurium (strain LT2 / SGSC1412 / ATCC 700720).